The following is a 201-amino-acid chain: Syndecan-2 (201 aa).

The first 18 residues, 1 to 18 (MQRAWILLTLGLMACVSA), serve as a signal peptide directing secretion. At 19–144 (ETRAELTSDK…HSDNLFKRTE (126 aa)) the chain is on the extracellular side. S41, S55, and S57 each carry an O-linked (Xyl...) (glycosaminoglycan) serine glycan. Disordered stretches follow at residues 42 to 69 (GLYPIDDDDYSSASGSGAYEDKGSPDLT) and 88 to 129 (TMTL…KSTD). Residues 90–102 (TLKTQSITPTQTE) show a composition bias toward polar residues. Over residues 106–123 (ETDKKEFEISEAEEKQDP) the composition is skewed to basic and acidic residues. At S115 the chain carries Phosphoserine. A helical transmembrane segment spans residues 145–169 (VLAAVIAGGVIGFLFAIFLILLLVY). Over 170-201 (RMRKKDEGSYDLGERKPSSAAYQKAPTKEFYA) the chain is Cytoplasmic. Residues 178–201 (SYDLGERKPSSAAYQKAPTKEFYA) are disordered. S187 carries the phosphoserine modification.

This sequence belongs to the syndecan proteoglycan family. As to quaternary structure, interacts (via cytoplasmic domain) with SARM1. Forms a complex with SDCBP and PDCD6IP. Post-translationally, O-glycosylated; contains both heparan sulfate and chondroitin sulfate.

Its subcellular location is the membrane. Functionally, cell surface proteoglycan which regulates dendritic arbor morphogenesis. The polypeptide is Syndecan-2 (Sdc2) (Rattus norvegicus (Rat)).